A 62-amino-acid chain; its full sequence is Putative antitoxin AF_1095 (62 aa).

It belongs to the UPF0165 family.

In terms of biological role, possibly the antitoxin component of a type II toxin-antitoxin (TA) system. This chain is Putative antitoxin AF_1095, found in Archaeoglobus fulgidus (strain ATCC 49558 / DSM 4304 / JCM 9628 / NBRC 100126 / VC-16).